Reading from the N-terminus, the 430-residue chain is uncharacterized protein (430 aa).

A run of 2 helical transmembrane segments spans residues 20-40 and 405-425; these read YLCLVFLAVYYAYPLLFGIMP and YIWWALHISVCVLTILRLLVI.

It is found in the membrane. This is an uncharacterized protein from Schizosaccharomyces pombe (strain 972 / ATCC 24843) (Fission yeast).